An 87-amino-acid polypeptide reads, in one-letter code: Putative defensin-like protein 238 (87 aa).

The signal sequence occupies residues 1 to 23 (MRSITWFIVFCVFMFIALNHVKG). 4 disulfides stabilise this stretch: cysteine 30-cysteine 87, cysteine 40-cysteine 65, cysteine 48-cysteine 78, and cysteine 63-cysteine 80.

The protein belongs to the DEFL family.

The protein resides in the secreted. The protein is Putative defensin-like protein 238 (SCRL16) of Arabidopsis thaliana (Mouse-ear cress).